A 346-amino-acid chain; its full sequence is Probable aldo-keto reductase 2 (346 aa).

Tyr63 serves as the catalytic Proton donor. His131 lines the substrate pocket. Residue 210–220 coordinates NADP(+); it reads SPLGRGFLAAG.

It belongs to the aldo/keto reductase family. Aldo/keto reductase 13 subfamily.

The polypeptide is Probable aldo-keto reductase 2 (AGD2) (Arabidopsis thaliana (Mouse-ear cress)).